Reading from the N-terminus, the 432-residue chain is 23S rRNA (uracil(1939)-C(5))-methyltransferase RlmD (432 aa).

In terms of domain architecture, TRAM spans 10 to 68 (RVTTREIITVTTDGLDAFGQGVARHHGKALFIAGLLPGERAEVVLSEDKKQFARGDVKK). [4Fe-4S] cluster is bound by residues Cys-81, Cys-87, Cys-90, and Cys-162. S-adenosyl-L-methionine contacts are provided by Gln-265, Phe-294, Asn-299, Glu-315, Asn-342, and Asp-363. The Nucleophile role is filled by Cys-389.

The protein belongs to the class I-like SAM-binding methyltransferase superfamily. RNA M5U methyltransferase family. RlmD subfamily.

The catalysed reaction is uridine(1939) in 23S rRNA + S-adenosyl-L-methionine = 5-methyluridine(1939) in 23S rRNA + S-adenosyl-L-homocysteine + H(+). In terms of biological role, catalyzes the formation of 5-methyl-uridine at position 1939 (m5U1939) in 23S rRNA. The chain is 23S rRNA (uracil(1939)-C(5))-methyltransferase RlmD from Cronobacter sakazakii (strain ATCC BAA-894) (Enterobacter sakazakii).